Here is a 215-residue protein sequence, read N- to C-terminus: Nascent polypeptide-associated complex subunit alpha (215 aa).

Residues 1–81 are disordered; sequence MPGEATETVP…SEKKARKAMS (81 aa). The span at 9–28 shows a compositional bias: polar residues; it reads VPATEQELPQPQAETGSGTE. The span at 29–42 shows a compositional bias: acidic residues; it reads SDSDESVPELEEQD. A Phosphoserine; by ILK1 modification is found at serine 43. Low complexity predominate over residues 44 to 57; it reads TQATTQQAQLAAAA. The required for DNA-binding stretch occupies residues 69–80; sequence QSRSEKKARKAM. Residues 70-135 form the NAC-A/B domain; sequence SRSEKKARKA…AKIEDLSQQA (66 aa). Positions 93–108 are RNA/DNA-binding; the sequence is RVTIRKSKNILFVITK. Phosphoserine is present on serine 132. Lysine 142 is modified (N6-acetyllysine; alternate). Residue lysine 142 forms a Glycyl lysine isopeptide (Lys-Gly) (interchain with G-Cter in SUMO2); alternate linkage. Phosphothreonine; by GSK3-beta is present on threonine 159. The residue at position 161 (threonine 161) is a Phosphothreonine. 4 positions are modified to phosphoserine: serine 166, serine 186, serine 191, and serine 203. Residues 176-213 enclose the UBA domain; sequence VEVKDIELVMSQANVSRAKAVRALKNNSNDIVNAIMEL.

Belongs to the NAC-alpha family. As to quaternary structure, part of the nascent polypeptide-associated complex (NAC), which is a heterodimer of NACA and BTF3 (via NAC-A/B domains). NAC associates with ribosomes through the BTF3/NACB subunit and contacts the ribosomal protein L23, which is positioned near the exiting site. Both subunits can contact nascent polypeptide chains. NACA may also form homodimers, and only this form binds DNA. Interacts with TBP and JUN. Post-translationally, phosphorylation of Ser-43 by ILK during cell adhesion may promote nuclear localization. Phosphorylation of Thr-159 by GSK3B may promote proteasome mediated degradation.

Its subcellular location is the cytoplasm. It localises to the nucleus. Functionally, prevents inappropriate targeting of non-secretory polypeptides to the endoplasmic reticulum (ER). Binds to nascent polypeptide chains as they emerge from the ribosome and blocks their interaction with the signal recognition particle (SRP), which normally targets nascent secretory peptides to the ER. Also reduces the inherent affinity of ribosomes for protein translocation sites in the ER membrane (M sites). May act as a specific coactivator for JUN, binding to DNA and stabilizing the interaction of JUN homodimers with target gene promoters. The sequence is that of Nascent polypeptide-associated complex subunit alpha (NACA) from Pongo abelii (Sumatran orangutan).